We begin with the raw amino-acid sequence, 357 residues long: NADH-quinone oxidoreductase subunit H (357 aa).

8 helical membrane-spanning segments follow: residues 18–38 (VAWM…PIIL), 92–112 (VLFV…WAVV), 127–147 (LLYI…AGWA), 165–185 (VSYE…SGSL), 206–226 (FLSW…ISAV), 268–288 (ILLS…PIDI), 294–314 (IPGW…FVWF), and 329–349 (LGWK…AIWM).

Belongs to the complex I subunit 1 family. In terms of assembly, NDH-1 is composed of 14 different subunits. Subunits NuoA, H, J, K, L, M, N constitute the membrane sector of the complex.

It localises to the cell inner membrane. The catalysed reaction is a quinone + NADH + 5 H(+)(in) = a quinol + NAD(+) + 4 H(+)(out). Its function is as follows. NDH-1 shuttles electrons from NADH, via FMN and iron-sulfur (Fe-S) centers, to quinones in the respiratory chain. The immediate electron acceptor for the enzyme in this species is believed to be ubiquinone. Couples the redox reaction to proton translocation (for every two electrons transferred, four hydrogen ions are translocated across the cytoplasmic membrane), and thus conserves the redox energy in a proton gradient. This subunit may bind ubiquinone. The sequence is that of NADH-quinone oxidoreductase subunit H from Bordetella bronchiseptica (strain ATCC BAA-588 / NCTC 13252 / RB50) (Alcaligenes bronchisepticus).